The following is a 582-amino-acid chain: BTB/POZ domain and ankyrin repeat-containing protein NPR1 (582 aa).

Positions 1-18 (MEPPTSHVTNAFSDSDSA) are enriched in polar residues. Positions 1-25 (MEPPTSHVTNAFSDSDSASVEEGGA) are disordered. The 86-residue stretch at 55 to 140 (ADARIAVPGG…VLDYLYSGRV (86 aa)) folds into the BTB domain. Residues 147 to 161 (ACLCVDEDCAHVGCH) form a C2HC NPR-type zinc finger. Residues Cys150, Cys155, His157, and Cys160 each coordinate Zn(2+). 4 ANK repeats span residues 229-258 (RSNL…SLGL), 269-299 (KHVR…NLDD), 301-328 (FALH…DVNH), and 332-361 (RGYT…RPAD). The interval 391-526 (PSPKDRLCIE…VLDKIMDDET (136 aa)) is salicylic acid-binding core (SBC). Arg436 serves as a coordination point for salicylate. The segment at 551-582 (QKAFHEDKEENDRSGLSSSSSSTSIGAIRPRR) is disordered. A compositionally biased stretch (basic and acidic residues) spans 553–563 (AFHEDKEENDR). Residues 564 to 574 (SGLSSSSSSTS) are compositionally biased toward low complexity.

It belongs to the plant 'ANKYRIN-BTB/POZ' family. 'NPR1-like' subfamily. Oligomer in an uninduced state; disulfide-linked. Forms activated monomer upon changes in cellular redox potential. Interacts with TGA2.1, TGA2.2, TGA2.3, LG2, TGAL1 and TGAL4. Interacts with NRR, RH1, RH2 and RH3.

The protein resides in the cytoplasm. Its subcellular location is the nucleus. It localises to the nuclear body. Its pathway is protein modification; protein ubiquitination. Salicylic acid (SA)-binding substrate-specific adapter of an E3 ubiquitin-protein ligase complex (CUL3-RBX1-BTB) which mediates the ubiquitination and subsequent proteasomal degradation of target proteins. Transcription cofactor that represses gene expression in the absence of salicylic acid (SA), when attached to negative cis-elements (W-box) with WRKY transcription factors, but stimulates gene expression upon activation by SA, when sumoylated and attached to positive cis-elements (as-1) with TGA transcription factors, thus confering immunity through a series of gene regulations ending in a significant increase in antimicrobial and defense genes expression. Key positive factor of disease resistance. Plays an essential role in benzothiadiazole (BTH)-induced resistance to the blast fungus disease caused by Magnaporthe oryzae. Involved in defense response against the bacterial blight disease caused by Xanthomonas oryzae pv. oryzae (Xoo). Over-expression of NPR1/NH1 confers disease resistance to Xoo, but also enhances herbivore susceptibility. Functions as a transcriptional coactivator of TGA2.1 and LG2 in vitro. Involved in defense response against herbivore. Plants silencing NPR1/NH1 have increased herbivore-induced trypsin proteinase inhibitors and volatiles, which reduces the performance of the striped stem borer (SSB) Chilo suppressalis. The chain is BTB/POZ domain and ankyrin repeat-containing protein NPR1 from Oryza sativa subsp. japonica (Rice).